Reading from the N-terminus, the 180-residue chain is Cell wall / vacuolar inhibitor of fructosidase 2 (180 aa).

Positions 1-23 (MASSLIFLLLVTLTFSASTLISA) are cleaved as a signal peptide. N-linked (GlcNAc...) asparagine glycosylation occurs at Asn26. Cys35 and Cys44 are joined by a disulfide. Asn73 and Asn84 each carry an N-linked (GlcNAc...) asparagine glycan. A disulfide bridge connects residues Cys101 and Cys141.

Belongs to the PMEI family. In terms of tissue distribution, mostly expressed at low levels in seedlings, stems, leaves and flowers (in all organs), and, to a lower extent, in roots and siliques.

Its subcellular location is the vacuole. In terms of biological role, inhibits fructosidases from both cell wall (cell wall invertase CWI) and vacuoles (vacuolar invertase VI). This is Cell wall / vacuolar inhibitor of fructosidase 2 (C/VIF2) from Arabidopsis thaliana (Mouse-ear cress).